The sequence spans 259 residues: Early E4 30 kDa protein (259 aa).

This sequence belongs to the adenoviridae E4 30 to 34 kDa protein family. As to quaternary structure, interacts with E1B-55k.

The protein localises to the host nucleus. Its subcellular location is the host cytoplasm. Its function is as follows. Plays a major role to prevent cellular inhibition of viral genome replication by nuclear bodies. Assembles an SCF-like E3 ubiquitin ligase complex based on the cellular proteins ELOB, ELOC, CUL5 and RBX1, in cooperation with viral E1B-55K. This viral RING-type ligase ubiquitinates cellular substrates prior to proteasomal degradation: p53/TP53, LIG4, MRE11-RAD50-NBS1 (MRN) complex, ITGA3, DAXX and BLM. This is Early E4 30 kDa protein from Canine adenovirus serotype 2 (strain Toronto A 26-61) (CAdV-2).